We begin with the raw amino-acid sequence, 64 residues long: Large ribosomal subunit protein bL35 (64 aa).

The protein belongs to the bacterial ribosomal protein bL35 family.

The protein is Large ribosomal subunit protein bL35 of Aliivibrio fischeri (strain ATCC 700601 / ES114) (Vibrio fischeri).